The sequence spans 72 residues: MATKDTGGGQQKATRNTEEVEEQAQDAQASEDLKERQEKLSDDVDSVLDEIDDVLEENAEDFVRSFVQKGGE.

The segment covering 1 to 10 has biased composition (gly residues); the sequence is MATKDTGGGQ. The tract at residues 1–45 is disordered; that stretch reads MATKDTGGGQQKATRNTEEVEEQAQDAQASEDLKERQEKLSDDVD. A coiled-coil region spans residues 9–60; sequence GQQKATRNTEEVEEQAQDAQASEDLKERQEKLSDDVDSVLDEIDDVLEENAE. The tract at residues 28–66 is ARC ATPase binding; it reads QASEDLKERQEKLSDDVDSVLDEIDDVLEENAEDFVRSF. Residues 31–42 show a composition bias toward basic and acidic residues; the sequence is EDLKERQEKLSD. Glu72 participates in a covalent cross-link: Isoglutamyl lysine isopeptide (Glu-Lys) (interchain with K-? in acceptor proteins).

The protein belongs to the prokaryotic ubiquitin-like protein family. In terms of assembly, strongly interacts with the proteasome-associated ATPase ARC through a hydrophobic interface; the interacting region of Pup lies in its C-terminal half. There is one Pup binding site per ARC hexamer ring.

The protein operates within protein degradation; proteasomal Pup-dependent pathway. Functionally, protein modifier that is covalently attached to lysine residues of substrate proteins, thereby targeting them for proteasomal degradation. The tagging system is termed pupylation. The protein is Prokaryotic ubiquitin-like protein Pup of Streptomyces avermitilis (strain ATCC 31267 / DSM 46492 / JCM 5070 / NBRC 14893 / NCIMB 12804 / NRRL 8165 / MA-4680).